The sequence spans 196 residues: Endonuclease V (196 aa).

Mg(2+) is bound by residues D37 and D98.

The protein belongs to the endonuclease V family. It depends on Mg(2+) as a cofactor.

It localises to the cytoplasm. The catalysed reaction is Endonucleolytic cleavage at apurinic or apyrimidinic sites to products with a 5'-phosphate.. DNA repair enzyme involved in the repair of deaminated bases. Selectively cleaves double-stranded DNA at the second phosphodiester bond 3' to a deoxyinosine leaving behind the intact lesion on the nicked DNA. The chain is Endonuclease V from Sulfolobus acidocaldarius (strain ATCC 33909 / DSM 639 / JCM 8929 / NBRC 15157 / NCIMB 11770).